The chain runs to 257 residues: Acetylglutamate kinase (257 aa).

Substrate is bound by residues 43-44, R65, and N157; that span reads GG. ATP is bound by residues 180–185 and 208–210; these read DVSGIL and IIT.

This sequence belongs to the acetylglutamate kinase family. ArgB subfamily. In terms of assembly, homodimer.

The protein resides in the cytoplasm. The enzyme catalyses N-acetyl-L-glutamate + ATP = N-acetyl-L-glutamyl 5-phosphate + ADP. It functions in the pathway amino-acid biosynthesis; L-arginine biosynthesis; N(2)-acetyl-L-ornithine from L-glutamate: step 2/4. Catalyzes the ATP-dependent phosphorylation of N-acetyl-L-glutamate. The chain is Acetylglutamate kinase from Proteus mirabilis (strain HI4320).